Here is a 388-residue protein sequence, read N- to C-terminus: Oxytocin receptor (388 aa).

Over 1-38 (MEGTPAANWSIELDLGSGVPPGAEGNLTAGPPRRNEAL) the chain is Extracellular. Asn-8 and Asn-26 each carry an N-linked (GlcNAc...) asparagine glycan. A helical membrane pass occupies residues 39-63 (ARVEVAVLCLILFLALSGNACVLLA). Residues 64–74 (LRTTRHKHSRL) lie on the Cytoplasmic side of the membrane. The chain crosses the membrane as a helical span at residues 75–97 (FFFMKHLSIADLVVAVFQVLPQL). At 98–113 (LWDITFRFYGPDLLCR) the chain is on the extracellular side. A disulfide bridge connects residues Cys-112 and Cys-187. The helical transmembrane segment at 114–135 (LVKYLQVVGMFASTYLLLLMSL) threads the bilayer. The Cytoplasmic segment spans residues 136-154 (DRCLAICQPLRSLRRRTDR). Residues 155–175 (LAVLATWLGCLVASVPQVHIF) traverse the membrane as a helical segment. At 176–202 (SLREVADGVFDCWAVFIQPWGPKAYVT) the chain is on the extracellular side. A helical membrane pass occupies residues 203-225 (WITLAVYIVPVIVLAACYGLISF). The Cytoplasmic portion of the chain corresponds to 226 to 274 (KIWQNLRLKTAAAAAAAEGSDAAGGAGRAALARVSSVKLISKAKIRTVK). The chain crosses the membrane as a helical span at residues 275 to 293 (MTFIIVLAFIVCWTPFFFV). Residues 294 to 308 (QMWSVWDVNAPKEAS) are Extracellular-facing. The helical transmembrane segment at 309–331 (AFIIAMLLASLNSCCNPWIYMLF) threads the bilayer. Over 332 to 388 (TGHLFHELVQRFLCCSARYLKGSRPGETSISKKSNSSTFVLSRRSSSQRSCSQPSSA) the chain is Cytoplasmic. A disordered region spans residues 354-388 (SRPGETSISKKSNSSTFVLSRRSSSQRSCSQPSSA). 2 positions are modified to phosphoserine: Ser-365 and Ser-367. Residues 365–388 (SNSSTFVLSRRSSSQRSCSQPSSA) show a composition bias toward low complexity.

The protein belongs to the G-protein coupled receptor 1 family. Vasopressin/oxytocin receptor subfamily.

The protein resides in the cell membrane. Its function is as follows. Receptor for oxytocin. The activity of this receptor is mediated by G proteins which activate a phosphatidylinositol-calcium second messenger system. The polypeptide is Oxytocin receptor (Oxtr) (Mus musculus (Mouse)).